The chain runs to 141 residues: Small ribosomal subunit protein bS6 (141 aa).

A disordered region spans residues 97–141; sequence TGQSEMLKAEENRSERRERRDRPEHSDSADGDDGDNSDVSDNADE. The span at 103 to 124 shows a compositional bias: basic and acidic residues; that stretch reads LKAEENRSERRERRDRPEHSDS. Positions 125 to 141 are enriched in acidic residues; sequence ADGDDGDNSDVSDNADE.

It belongs to the bacterial ribosomal protein bS6 family.

Binds together with bS18 to 16S ribosomal RNA. The sequence is that of Small ribosomal subunit protein bS6 from Pseudomonas syringae pv. syringae (strain B728a).